Consider the following 451-residue polypeptide: MAAQVEDDVANLKLDDSTTKPTNGTSQPDSKLSAEAEDSDDDAEGDGNGTGEAGADGAAKKKKKRKPRKKKKAGTSATAGAKSQTSPPRVLISDLFPNDSYPEGEICEYRDENSYRTTNEEKRHLDRMNNDFLTDYRKGAEIHRQVRQWAANWIKPGMTLTEIAEGIEDSVRALTGHQGLEEGDAQKAGMGFPTGLSINHCAAHYTPNAGNKVVVNYEDVMKVDFGVHINGRIVDSAFTKTFDPVYDPLVEACKAATNAGIKEAGIDVRMSDIGAAIQEVMESYEVEIGGKMLPVKCIRNLNGHSIGHYTIHGGKTVPIVKGSDQTKMEEGETFAIETFGSTGKGYVRDDMETSHYALRPDAPKVALRISSAKSLLASITKNFGTLPFCRRYLDRLGHDKYLLGLNNLVSSGIVEAYPPLCDIKGSWTAQSEHTFVLRPTCKEVLSRGDDY.

The disordered stretch occupies residues 1 to 97 (MAAQVEDDVA…PRVLISDLFP (97 aa)). Polar residues predominate over residues 19–28 (TKPTNGTSQP). Acidic residues predominate over residues 35 to 45 (EAEDSDDDAEG). The span at 60 to 73 (KKKKKRKPRKKKKA) shows a compositional bias: basic residues. Residues 74 to 83 (GTSATAGAKS) are compositionally biased toward low complexity. His-204 lines the substrate pocket. Residues Asp-224, Asp-235, and His-304 each contribute to the a divalent metal cation site. His-312 provides a ligand contact to substrate. Residues Glu-337 and Glu-432 each coordinate a divalent metal cation.

The protein belongs to the peptidase M24A family. Methionine aminopeptidase eukaryotic type 2 subfamily. Co(2+) serves as cofactor. The cofactor is Zn(2+). It depends on Mn(2+) as a cofactor. Requires Fe(2+) as cofactor.

It localises to the cytoplasm. The catalysed reaction is Release of N-terminal amino acids, preferentially methionine, from peptides and arylamides.. In terms of biological role, cotranslationally removes the N-terminal methionine from nascent proteins. The N-terminal methionine is often cleaved when the second residue in the primary sequence is small and uncharged (Met-Ala-, Cys, Gly, Pro, Ser, Thr, or Val). This Leptosphaeria maculans (strain JN3 / isolate v23.1.3 / race Av1-4-5-6-7-8) (Blackleg fungus) protein is Methionine aminopeptidase 2-2.